Reading from the N-terminus, the 321-residue chain is Glycerol-3-phosphate dehydrogenase [NAD(P)+] (321 aa).

NADPH is bound by residues Trp15, Arg35, and Lys101. Sn-glycerol 3-phosphate is bound by residues Lys101 and Gly129. Ala133 contributes to the NADPH binding site. Sn-glycerol 3-phosphate contacts are provided by Lys184, Asp237, Ser247, Arg248, and Asn249. Lys184 functions as the Proton acceptor in the catalytic mechanism. Arg248 contacts NADPH. The NADPH site is built by Val268 and Glu270.

Belongs to the NAD-dependent glycerol-3-phosphate dehydrogenase family.

The protein resides in the cytoplasm. The enzyme catalyses sn-glycerol 3-phosphate + NAD(+) = dihydroxyacetone phosphate + NADH + H(+). It carries out the reaction sn-glycerol 3-phosphate + NADP(+) = dihydroxyacetone phosphate + NADPH + H(+). It functions in the pathway membrane lipid metabolism; glycerophospholipid metabolism. Catalyzes the reduction of the glycolytic intermediate dihydroxyacetone phosphate (DHAP) to sn-glycerol 3-phosphate (G3P), the key precursor for phospholipid synthesis. In Acidiphilium cryptum (strain JF-5), this protein is Glycerol-3-phosphate dehydrogenase [NAD(P)+].